A 107-amino-acid polypeptide reads, in one-letter code: Ig kappa chain V-VI region XRPC 24 (107 aa).

The tract at residues 1–23 (EIVLTQSPAITAASLGQKVTITC) is framework-1. Cys-23 and Cys-87 are oxidised to a cystine. The complementarity-determining-1 stretch occupies residues 24–33 (SASSSVSYMH). The framework-2 stretch occupies residues 34–48 (WYQQKSGTSPKPWIY). The segment at 49–55 (EISKLAS) is complementarity-determining-2. The interval 56–87 (GVPARFSGSGSGTSYSLTISSMEAEDAAIYYC) is framework-3. Residues 88–96 (QQWNYPLIT) form a complementarity-determining-3 region. The framework-4 stretch occupies residues 97–106 (FGSGTKLEIK).

This Mus musculus (Mouse) protein is Ig kappa chain V-VI region XRPC 24.